We begin with the raw amino-acid sequence, 969 residues long: Leucine--tRNA ligase (969 aa).

The short motif at 78-89 (PYPSGEGLHVGH) is the 'HIGH' region element. The 'KMSKS' region signature appears at 739-743 (KIGKS). K742 contributes to the ATP binding site.

The protein belongs to the class-I aminoacyl-tRNA synthetase family.

Its subcellular location is the cytoplasm. The catalysed reaction is tRNA(Leu) + L-leucine + ATP = L-leucyl-tRNA(Leu) + AMP + diphosphate. The chain is Leucine--tRNA ligase from Mycobacterium tuberculosis (strain ATCC 25177 / H37Ra).